The following is a 105-amino-acid chain: Ferredoxin (105 aa).

Cys8 and Cys16 together coordinate [3Fe-4S] cluster. Residues Cys20, Cys39, Cys42, and Cys45 each coordinate [4Fe-4S] cluster. One can recognise a 4Fe-4S ferredoxin-type domain in the interval 30 to 59; the sequence is RSLYIHPDECVDCGACEPVCPVEAIFYEDD. Residue Cys49 coordinates [3Fe-4S] cluster.

It depends on [4Fe-4S] cluster as a cofactor. [3Fe-4S] cluster is required as a cofactor.

In terms of biological role, ferredoxins are iron-sulfur proteins that transfer electrons in a wide variety of metabolic reactions. Functionally, putative electron transport protein for the cytochrome P-450SOY system from the same organism. This Streptomyces griseus protein is Ferredoxin.